A 491-amino-acid chain; its full sequence is Ketol-acid reductoisomerase (NADP(+)) (491 aa).

The KARI N-terminal Rossmann domain occupies 15–208; it reads AQLGTCRFME…GGHRAGVLES (194 aa). NADP(+) contacts are provided by residues 45–48, Arg-68, Arg-76, Ser-78, and 108–110; these read CGAQ and DKQ. The active site involves His-132. Residue Gly-158 coordinates NADP(+). KARI C-terminal knotted domains lie at 209 to 353 and 354 to 486; these read SFVA…KEQE and YFDK…MTAM. Mg(2+) is bound by residues Asp-217, Glu-221, Glu-389, and Glu-393. Ser-414 is a binding site for substrate.

The protein belongs to the ketol-acid reductoisomerase family. Requires Mg(2+) as cofactor.

It catalyses the reaction (2R)-2,3-dihydroxy-3-methylbutanoate + NADP(+) = (2S)-2-acetolactate + NADPH + H(+). The enzyme catalyses (2R,3R)-2,3-dihydroxy-3-methylpentanoate + NADP(+) = (S)-2-ethyl-2-hydroxy-3-oxobutanoate + NADPH + H(+). Its pathway is amino-acid biosynthesis; L-isoleucine biosynthesis; L-isoleucine from 2-oxobutanoate: step 2/4. It functions in the pathway amino-acid biosynthesis; L-valine biosynthesis; L-valine from pyruvate: step 2/4. Functionally, involved in the biosynthesis of branched-chain amino acids (BCAA). Catalyzes an alkyl-migration followed by a ketol-acid reduction of (S)-2-acetolactate (S2AL) to yield (R)-2,3-dihydroxy-isovalerate. In the isomerase reaction, S2AL is rearranged via a Mg-dependent methyl migration to produce 3-hydroxy-3-methyl-2-ketobutyrate (HMKB). In the reductase reaction, this 2-ketoacid undergoes a metal-dependent reduction by NADPH to yield (R)-2,3-dihydroxy-isovalerate. The polypeptide is Ketol-acid reductoisomerase (NADP(+)) (Christiangramia forsetii (strain DSM 17595 / CGMCC 1.15422 / KT0803) (Gramella forsetii)).